Reading from the N-terminus, the 386-residue chain is Alkanesulfonate monooxygenase (386 aa).

This sequence belongs to the SsuD family.

It catalyses the reaction an alkanesulfonate + FMNH2 + O2 = an aldehyde + FMN + sulfite + H2O + 2 H(+). In terms of biological role, catalyzes the desulfonation of aliphatic sulfonates. In Delftia acidovorans (strain DSM 14801 / SPH-1), this protein is Alkanesulfonate monooxygenase.